Consider the following 553-residue polypeptide: Solute carrier family 45 member 3 (553 aa).

11 helical membrane passes run 19 to 39, 52 to 72, 88 to 108, 120 to 140, 161 to 181, 198 to 218, 275 to 295, 323 to 343, 353 to 373, 382 to 402, and 522 to 542; these read LLVNLLTFGLEVCLAAGITYV, FMTMVLGIGPVLGLVCVPLLG, FIWALSLGILLSLFLIPRAGW, LELALLILGVGLLDFCGQVCF, YSVYAFMISLGGCLGYLLPAI, CLFGLLTLIFLTCVAATLLVA, FVAELCSWMALMTFTLFYTDF, MGSLGLFLQCAISLVFSLVMD, AVYLASVAAFPVAAGATCLSH, AALTGFTFSALQILPYTLASL, and AYMVSAAGLGLVAIYFATQVV.

It belongs to the glycoside-pentoside-hexuronide (GPH) cation symporter transporter (TC 2.A.2) family. Prostate specific. Expressed in all prostatic glandular cells. Expressed both in normal and cancerous prostates.

The protein resides in the membrane. It carries out the reaction sucrose(out) + H(+)(out) = sucrose(in) + H(+)(in). In terms of biological role, proton-associated sucrose transporter. May be able to transport also glucose and fructose. This Homo sapiens (Human) protein is Solute carrier family 45 member 3.